The following is a 226-amino-acid chain: Thiamine-phosphate synthase (226 aa).

4-amino-2-methyl-5-(diphosphooxymethyl)pyrimidine is bound by residues 46–50 (QFRDK) and D83. Residues D84 and D103 each coordinate Mg(2+). 4-amino-2-methyl-5-(diphosphooxymethyl)pyrimidine is bound at residue S122. 149–151 (TQS) serves as a coordination point for 2-[(2R,5Z)-2-carboxy-4-methylthiazol-5(2H)-ylidene]ethyl phosphate. K152 is a binding site for 4-amino-2-methyl-5-(diphosphooxymethyl)pyrimidine. 2-[(2R,5Z)-2-carboxy-4-methylthiazol-5(2H)-ylidene]ethyl phosphate contacts are provided by residues G181 and 201 to 202 (IT).

Belongs to the thiamine-phosphate synthase family. Requires Mg(2+) as cofactor.

The catalysed reaction is 2-[(2R,5Z)-2-carboxy-4-methylthiazol-5(2H)-ylidene]ethyl phosphate + 4-amino-2-methyl-5-(diphosphooxymethyl)pyrimidine + 2 H(+) = thiamine phosphate + CO2 + diphosphate. It carries out the reaction 2-(2-carboxy-4-methylthiazol-5-yl)ethyl phosphate + 4-amino-2-methyl-5-(diphosphooxymethyl)pyrimidine + 2 H(+) = thiamine phosphate + CO2 + diphosphate. It catalyses the reaction 4-methyl-5-(2-phosphooxyethyl)-thiazole + 4-amino-2-methyl-5-(diphosphooxymethyl)pyrimidine + H(+) = thiamine phosphate + diphosphate. It participates in cofactor biosynthesis; thiamine diphosphate biosynthesis; thiamine phosphate from 4-amino-2-methyl-5-diphosphomethylpyrimidine and 4-methyl-5-(2-phosphoethyl)-thiazole: step 1/1. In terms of biological role, condenses 4-methyl-5-(beta-hydroxyethyl)thiazole monophosphate (THZ-P) and 2-methyl-4-amino-5-hydroxymethyl pyrimidine pyrophosphate (HMP-PP) to form thiamine monophosphate (TMP). The polypeptide is Thiamine-phosphate synthase (Haemophilus influenzae (strain ATCC 51907 / DSM 11121 / KW20 / Rd)).